The sequence spans 404 residues: Demethylphylloquinone reductase NdbB (404 aa).

7-43 (RICILGGGFGGLYTALRLGQLSWEGHTPPEIVLVDQR) serves as a coordination point for FAD. Residue 159–195 (IRIAIVGGGYSGVELAAKLGDRLGERGRIRIIERGKE) participates in NADP(+) binding.

The protein belongs to the NADH dehydrogenase family. Requires FAD as cofactor.

It catalyses the reaction demethylphylloquinone + NADPH + H(+) = demethylphylloquinol + NADP(+). It participates in cofactor biosynthesis; phylloquinone biosynthesis. Its activity is regulated as follows. Inhibited by dicumarol. Functionally, bifunctional oxidoreductase probably ables to act both on prenyl naphthoquinones and on prenyl benzoquinones. Catalyzes the penultimate step in the biosynthesis of vitamin K1. The sequence is that of Demethylphylloquinone reductase NdbB from Synechocystis sp. (strain ATCC 27184 / PCC 6803 / Kazusa).